The following is a 273-amino-acid chain: MEANMPKRKEPGRSLRIKVISMGNAEVGKSCIIKRYCEKRFVSKYLATIGIDYGVTKVHVRDREIKVNIFDMAGHPFFYEVRNEFYKDTQGVILVYDVGQKDSFDALDAWLAEMKQELGPHGNMENIIFVVCANKIDCTKHRCVDESEGRLWAESKGFLYFETSAQTGEGINEMFQTFYISIVDLCENGGKRPTTNSSASFTKEQADAIRRIRNSKGSWDMLGVKPGASRDEVNKACRKLAVLLHPDKCVAPGSEDAFKAVVNARTALLKNIK.

The interval methionine 1 to lysine 18 is required for interaction with MAPK1. GTP is bound by residues glycine 23 to serine 30, aspartate 71 to histidine 75, and asparagine 134 to aspartate 137. The region spanning glycine 217–lysine 273 is the J domain.

This sequence belongs to the small GTPase superfamily. Rab family. As to quaternary structure, interacts directly with MAPK1 (wild-type and kinase-deficient forms). Interacts directly (in GTP-bound form) with MAP2K1 (wild-type and kinase-deficient forms).

It is found in the nucleus. In terms of biological role, GTPase which can activate the MEK/ERK pathway and induce cell transformation when overexpressed. May act as a nuclear scaffold for MAPK1, probably by association with MAPK1 nuclear export signal leading to enhanced ERK1/ERK2 signaling. The protein is DnaJ homolog subfamily C member 27 (DNAJC27) of Pongo abelii (Sumatran orangutan).